A 507-amino-acid polypeptide reads, in one-letter code: Maturase K (507 aa).

Belongs to the intron maturase 2 family. MatK subfamily.

The protein resides in the plastid. Its subcellular location is the chloroplast. Functionally, usually encoded in the trnK tRNA gene intron. Probably assists in splicing its own and other chloroplast group II introns. The sequence is that of Maturase K from Cryptomeria japonica (Japanese cedar).